A 156-amino-acid chain; its full sequence is MNVIEGVVATPNARVAIAIARFNNFINDSLLEGAIDALKRIGQVTDDNITVVWVPGAYELPLVANVLAKTNRYDAVIALGTVIRGGTAHFEYVAGEASSGLSSVAMNSDIPVAFGVLTTESIEQAIERAGTKAGNKGAEAALTALEMINVIKAIKG.

5-amino-6-(D-ribitylamino)uracil-binding positions include Phe-22, 57 to 59, and 81 to 83; these read AYE and TVI. 86–87 serves as a coordination point for (2S)-2-hydroxy-3-oxobutyl phosphate; sequence GT. Catalysis depends on His-89, which acts as the Proton donor. Phe-114 is a binding site for 5-amino-6-(D-ribitylamino)uracil. Arg-128 is a binding site for (2S)-2-hydroxy-3-oxobutyl phosphate.

This sequence belongs to the DMRL synthase family. In terms of assembly, forms an icosahedral capsid composed of 60 subunits, arranged as a dodecamer of pentamers.

It catalyses the reaction (2S)-2-hydroxy-3-oxobutyl phosphate + 5-amino-6-(D-ribitylamino)uracil = 6,7-dimethyl-8-(1-D-ribityl)lumazine + phosphate + 2 H2O + H(+). Its pathway is cofactor biosynthesis; riboflavin biosynthesis; riboflavin from 2-hydroxy-3-oxobutyl phosphate and 5-amino-6-(D-ribitylamino)uracil: step 1/2. Catalyzes the formation of 6,7-dimethyl-8-ribityllumazine by condensation of 5-amino-6-(D-ribitylamino)uracil with 3,4-dihydroxy-2-butanone 4-phosphate. This is the penultimate step in the biosynthesis of riboflavin. The protein is 6,7-dimethyl-8-ribityllumazine synthase of Yersinia enterocolitica serotype O:8 / biotype 1B (strain NCTC 13174 / 8081).